Here is a 646-residue protein sequence, read N- to C-terminus: DEAD-box ATP-dependent RNA helicase 52 (646 aa).

2 disordered regions span residues 1–64 (MSSN…ANSG) and 76–117 (GSGY…PAVN). N-acetylserine is present on serine 2. Composition is skewed to gly residues over residues 54–64 (DRGGYGGANSG) and 76–87 (GSGYGGRGGPVG). Residues 146-174 (NTFAEIDLGEALNLNIQRCKYVKPTPVQR) carry the Q motif motif. The Helicase ATP-binding domain maps to 177–361 (IPILAAGRDL…SDFLSNYIFL (185 aa)). 190–197 (AQTGSGKT) contributes to the ATP binding site. The DEAD box motif lies at 305–308 (DEAD). Positions 388–539 (HLMDLLHAQR…EVPDWLTRYA (152 aa)) constitute a Helicase C-terminal domain.

It belongs to the DEAD box helicase family. DDX3/DED1 subfamily.

It carries out the reaction ATP + H2O = ADP + phosphate + H(+). This is DEAD-box ATP-dependent RNA helicase 52 (RH52) from Arabidopsis thaliana (Mouse-ear cress).